The primary structure comprises 1203 residues: DNA-directed RNA polymerase subunit beta' (1203 aa).

Zn(2+) is bound by residues Cys-60, Cys-62, Cys-75, and Cys-78. 3 residues coordinate Mg(2+): Asp-449, Asp-451, and Asp-453. Zn(2+) is bound by residues Cys-818, Cys-892, Cys-899, and Cys-902.

It belongs to the RNA polymerase beta' chain family. As to quaternary structure, the RNAP catalytic core consists of 2 alpha, 1 beta, 1 beta' and 1 omega subunit. When a sigma factor is associated with the core the holoenzyme is formed, which can initiate transcription. The cofactor is Mg(2+). It depends on Zn(2+) as a cofactor.

The enzyme catalyses RNA(n) + a ribonucleoside 5'-triphosphate = RNA(n+1) + diphosphate. Its function is as follows. DNA-dependent RNA polymerase catalyzes the transcription of DNA into RNA using the four ribonucleoside triphosphates as substrates. The chain is DNA-directed RNA polymerase subunit beta' from Bacillus anthracis.